Here is a 329-residue protein sequence, read N- to C-terminus: ATP-dependent (S)-NAD(P)H-hydrate dehydratase (329 aa).

The transit peptide at 1–28 (MALGPGCRAVRGCRPVLKRAFSLHKAHS) directs the protein to the mitochondrion. Residues 35–326 (ILQLVRSVVP…AEVGPAFRRL (292 aa)) enclose the YjeF C-terminal domain. At lysine 49 the chain carries N6-acetyllysine. A Phosphotyrosine modification is found at tyrosine 67. Residues glycine 135 and 188-194 (NHVEFGR) contribute to the (6S)-NADPHX site. Residues 228-232 (KGEQD) and 247-256 (GSGRRCGGQG) each bind ATP. A (6S)-NADPHX-binding site is contributed by aspartate 257.

The protein belongs to the NnrD/CARKD family. It depends on Mg(2+) as a cofactor.

It is found in the mitochondrion. The catalysed reaction is (6S)-NADHX + ATP = ADP + phosphate + NADH + H(+). It carries out the reaction (6S)-NADPHX + ATP = ADP + phosphate + NADPH + H(+). Its function is as follows. Catalyzes the dehydration of the S-form of NAD(P)HX at the expense of ATP, which is converted to ADP. Together with NAD(P)HX epimerase, which catalyzes the epimerization of the S- and R-forms, the enzyme allows the repair of both epimers of NAD(P)HX, a damaged form of NAD(P)H that is a result of enzymatic or heat-dependent hydration. The protein is ATP-dependent (S)-NAD(P)H-hydrate dehydratase of Bos taurus (Bovine).